Here is a 515-residue protein sequence, read N- to C-terminus: MEESHGSLEIDGSTQQDLLYPLFFQEYIYAFVHDHGLNVNGSIIYEPMENLGYDKKSSSLSVKRLISRMHQQNHFLFSVNDSKQNRFVVHKNRSDFQMISQGFTVILEIPFSLQKVNILEEKKIEKFHNLRSIHAIFPFLEDKISHLIYVSDILIPYPVHLEILVQTLYCCIQDAPSLHFLRFFLQEYRNWNSFITPKRASSFFSKENQRLFLFLYNSHVYICESIFVFLHKQCSHHFRSTSFGAFLERTLFYGKIEHLVVVVVLRNDFQKSLGFYKDPFMHYVRYQGKSILAAKGTHFLMKKWKTHLMHFWQCNFHLWAQPDRIRINQFSKHSLDLMGYLSRLRLNRLVVRNQMLEHFFIIDIPIKKFDSIVPILPLIGSLAKAKFCNVSGHPISKPIRADSSDSDILDRFGRICRNLSHYHSGSSKKKSLYRVKYILRLSCARTLARKHKSTVRAFLKRLGSEFLEEFLTEEEQVLSLILSKTYLASHRSHKERIWYLDIIRINDLVNFEFKD.

The protein belongs to the intron maturase 2 family. MatK subfamily.

Its subcellular location is the plastid. It localises to the chloroplast. In terms of biological role, usually encoded in the trnK tRNA gene intron. Probably assists in splicing its own and other chloroplast group II introns. This chain is Maturase K, found in Ceratophyllum demersum (Rigid hornwort).